A 933-amino-acid polypeptide reads, in one-letter code: MEDRETHLGTREVNETSPDLLKNTPSNIARLEDVIEQCHGRQKYLAQTRSPSDGSDVRWYFCKVPLAENELAASVPRTDVVGKSEYFRFGMRDSLAIEASFLQREDELLSLWWKEYAECSEGPKLQVNSKKKSIETPSEASVSSSLYEVEEERVGVPVKGGLYEVDLVRRHCFPVYWNGDNRRVLRGHWFARKGGLDWLPIPETVSEQLEVAYRNKVWRRRSFQPSGLFAARIDLQGSSLGLHALFTGEDDTWEAWLNVDPSGFSGIVGYTGNGIKLRRGYAGSYSPKPTQEELRQQKEEEMDDYCSQVPVRHLVFMVHGIGQKGEKSNLVDDVGNFRQITAALAERHLTSHQLSTQRVLFIPCQWRKGLKLSGEAAVDKCTLDGVRRFREMLSATVHDVLYYMSPIYCQAIIDSVSKQLNRLYLKFLKRNPDYVGKISIYGHSLGSVLSYDILCHQHNLSSPFPMDSVYKKFFPDEESPPTPAKADKPCSSHPSSNFEPEKSDQLNNPEKITGQDNNTMAKEPTVLEHHDVIQEDPSLISDSVVANVGLERRGGQEDDHHDSSGAISSQDVPDGADCRTPDSPSCSQEQSWDKESVNSNNEERIKLLQDEVNSLRSKVAQLLSENARILSDEKAKTSVAPKELNNEKVQTEDADAPTSFTPFIKYQKLEFKVDTFFAVGSPLGVFLALRNIRLGIGKGKDYWEEENAIEEMPACRRMFNIFHPYDPVAYRVEPLVCKEYLPERPVIIPYHRGGKRLHIGLQDFREDFAARSQRIMNHFDSVRTRVLTICQSKSADNLDEMEETDDEKDDRSYGSLMIERLTGTRDGRIDHMLQEKTFEHPYLQAIGAHTNYWRDQDTALFIIKHLYRELPDGPNSPTESTEGDDSPKDSSRPHSWIDRREADYDDEELPLTFSDKQITRSFSAEAKKYLKKP.

Basic and acidic residues predominate over residues 1–14 (MEDRETHLGTREVN). The tract at residues 1 to 22 (MEDRETHLGTREVNETSPDLLK) is disordered. Ser444 is an active-site residue. Disordered stretches follow at residues 475–517 (PDEE…GQDN) and 553–598 (RGGQ…ESVN). Polar residues predominate over residues 505–517 (QLNNPEKITGQDN). A compositionally biased stretch (basic and acidic residues) spans 553–563 (RGGQEDDHHDS). Residues 593-631 (DKESVNSNNEERIKLLQDEVNSLRSKVAQLLSENARILS) adopt a coiled-coil conformation. Positions 669–868 (LEFKVDTFFA…ALFIIKHLYR (200 aa)) constitute a DDHD domain. The segment at 871 to 903 (PDGPNSPTESTEGDDSPKDSSRPHSWIDRREAD) is disordered. Over residues 885–902 (DSPKDSSRPHSWIDRREA) the composition is skewed to basic and acidic residues.

In terms of assembly, forms oligomers. As to expression, expressed in roots, hypocotyls, leaves, stems and floral buds, and, at low levels, in siliques.

It localises to the vacuole membrane. Involved in vacuolar formation or function (e.g. formation of vacuolar membrane 'bulbs'). Required for amyloplast sedimentation in the endodermis during shoot gravitropism, which are thus acting as statoliths. Particularly important for the negative gravitropism leading to leaf movement observed in darkness. The protein is Phospholipase SGR2 (SGR2) of Arabidopsis thaliana (Mouse-ear cress).